An 870-amino-acid chain; its full sequence is Eukaryotic translation initiation factor 3 subunit C (870 aa).

Residues 1 to 92 form a disordered region; sequence MSRFFRGDSS…GVKVVKSAKN (92 aa). Residues 14-54 show a composition bias toward acidic residues; that stretch reads SSDEEEDLYSDDEEVQEQPEEESEEDDSEEDDDDDDSDSSS. The region spanning 608–782 is the PCI domain; the sequence is FHMHINLELL…SSIIFRKGVE (175 aa). The disordered stretch occupies residues 807 to 870; that stretch reads TLETRTQGTA…ALGAAVGSRA (64 aa). Gly residues predominate over residues 824 to 844; it reads GRGGRGGNRGGRGGNRGGRGG.

This sequence belongs to the eIF-3 subunit C family. Component of the eukaryotic translation initiation factor 3 (eIF-3) complex.

It localises to the cytoplasm. Its function is as follows. Component of the eukaryotic translation initiation factor 3 (eIF-3) complex, which is involved in protein synthesis of a specialized repertoire of mRNAs and, together with other initiation factors, stimulates binding of mRNA and methionyl-tRNAi to the 40S ribosome. The eIF-3 complex specifically targets and initiates translation of a subset of mRNAs involved in cell proliferation. The chain is Eukaryotic translation initiation factor 3 subunit C (nip1) from Sclerotinia sclerotiorum (strain ATCC 18683 / 1980 / Ss-1) (White mold).